Here is a 266-residue protein sequence, read N- to C-terminus: Beta-lactamase OXA-20 (266 aa).

A signal peptide spans 1–21; the sequence is MIIRFLALLFSAVVLVSLGHA. Residue Ser-72 is the Acyl-ester intermediate of the active site. The residue at position 75 (Lys-75) is an N6-carboxylysine. 210-212 contacts substrate; the sequence is KTG.

It belongs to the class-D beta-lactamase family.

The enzyme catalyses a beta-lactam + H2O = a substituted beta-amino acid. Its activity is regulated as follows. Inhibited by clavulanic acid. Its function is as follows. This is an oxacillin-hydrolyzing beta-lactamase. This Pseudomonas aeruginosa protein is Beta-lactamase OXA-20 (bla).